We begin with the raw amino-acid sequence, 389 residues long: Dual-specificity RNA methyltransferase RlmN (389 aa).

The Proton acceptor role is filled by Glu-94. The region spanning 134 to 367 (PRVRVTQCIS…CFVRRRRGDD (234 aa)) is the Radical SAM core domain. Cys-141 and Cys-372 form a disulfide bridge. [4Fe-4S] cluster is bound by residues Cys-148, Cys-152, and Cys-155. S-adenosyl-L-methionine-binding positions include 197–198 (GE), Ser-229, 253–255 (SLH), and Asn-329. Cys-372 serves as the catalytic S-methylcysteine intermediate.

The protein belongs to the radical SAM superfamily. RlmN family. [4Fe-4S] cluster serves as cofactor.

Its subcellular location is the cytoplasm. It catalyses the reaction adenosine(2503) in 23S rRNA + 2 reduced [2Fe-2S]-[ferredoxin] + 2 S-adenosyl-L-methionine = 2-methyladenosine(2503) in 23S rRNA + 5'-deoxyadenosine + L-methionine + 2 oxidized [2Fe-2S]-[ferredoxin] + S-adenosyl-L-homocysteine. The catalysed reaction is adenosine(37) in tRNA + 2 reduced [2Fe-2S]-[ferredoxin] + 2 S-adenosyl-L-methionine = 2-methyladenosine(37) in tRNA + 5'-deoxyadenosine + L-methionine + 2 oxidized [2Fe-2S]-[ferredoxin] + S-adenosyl-L-homocysteine. Its function is as follows. Specifically methylates position 2 of adenine 2503 in 23S rRNA and position 2 of adenine 37 in tRNAs. m2A2503 modification seems to play a crucial role in the proofreading step occurring at the peptidyl transferase center and thus would serve to optimize ribosomal fidelity. The polypeptide is Dual-specificity RNA methyltransferase RlmN (Sorangium cellulosum (strain So ce56) (Polyangium cellulosum (strain So ce56))).